We begin with the raw amino-acid sequence, 350 residues long: Alcohol dehydrogenase 1 (350 aa).

7 residues coordinate Zn(2+): C46, H69, C100, C103, C106, C114, and C156. Residues 180–186 (GAAGGLG), D204, K209, 271–273 (VGL), and R343 each bind NAD(+).

Belongs to the zinc-containing alcohol dehydrogenase family. As to quaternary structure, homotetramer. The cofactor is Zn(2+).

Its subcellular location is the cytoplasm. The enzyme catalyses a primary alcohol + NAD(+) = an aldehyde + NADH + H(+). It catalyses the reaction a secondary alcohol + NAD(+) = a ketone + NADH + H(+). This Kluyveromyces lactis (strain ATCC 8585 / CBS 2359 / DSM 70799 / NBRC 1267 / NRRL Y-1140 / WM37) (Yeast) protein is Alcohol dehydrogenase 1 (ADH1).